A 193-amino-acid chain; its full sequence is CASP-like protein 2D1 (193 aa).

The tract at residues 1 to 24 is disordered; that stretch reads MRANNNNTREEERSSSSKQQQPQA. Topologically, residues 1–29 are cytoplasmic; it reads MRANNNNTREEERSSSSKQQQPQAHMSLK. A helical membrane pass occupies residues 30–50; it reads IIDSCLRLSVVPLSVATIWLT. At 51-73 the chain is on the extracellular side; it reads VTNHESNPDYGNLDYNSIMGLKY. Residues 74–94 form a helical membrane-spanning segment; it reads MVGVSAISAIYALLSTISLWV. The Cytoplasmic portion of the chain corresponds to 95–109; sequence TCLVSKAWLFFVPDQ. The helical transmembrane segment at 110-132 threads the bilayer; it reads VLAYVMTTSVAGATEIVYLLNKG. Topologically, residues 133-151 are extracellular; it reads DKIVTWSEMCSSYPHYCSK. Residues 152-172 traverse the membrane as a helical segment; the sequence is LTIALGLHVFVLFFFLFLSVI. Topologically, residues 173-193 are cytoplasmic; sequence SAYRAFSPFDPPCDSQTNIDA.

The protein belongs to the Casparian strip membrane proteins (CASP) family. As to quaternary structure, homodimer and heterodimers.

It is found in the cell membrane. The protein is CASP-like protein 2D1 of Arabidopsis lyrata subsp. lyrata (Lyre-leaved rock-cress).